Consider the following 481-residue polypeptide: Probable glycine dehydrogenase (decarboxylating) subunit 2 (481 aa).

The tract at residues 1–26 (MVIFEKTRGKNSPSVMPSKKGDVSNI) is disordered. Lysine 263 bears the N6-(pyridoxal phosphate)lysine mark.

This sequence belongs to the GcvP family. C-terminal subunit subfamily. In terms of assembly, the glycine cleavage system is composed of four proteins: P, T, L and H. In this organism, the P 'protein' is a heterodimer of two subunits. It depends on pyridoxal 5'-phosphate as a cofactor.

It carries out the reaction N(6)-[(R)-lipoyl]-L-lysyl-[glycine-cleavage complex H protein] + glycine + H(+) = N(6)-[(R)-S(8)-aminomethyldihydrolipoyl]-L-lysyl-[glycine-cleavage complex H protein] + CO2. Its function is as follows. The glycine cleavage system catalyzes the degradation of glycine. The P protein binds the alpha-amino group of glycine through its pyridoxal phosphate cofactor; CO(2) is released and the remaining methylamine moiety is then transferred to the lipoamide cofactor of the H protein. This chain is Probable glycine dehydrogenase (decarboxylating) subunit 2, found in Francisella tularensis subsp. mediasiatica (strain FSC147).